A 214-amino-acid polypeptide reads, in one-letter code: MEGNSVVTPEIERLIQAVETADSAAKLVGAVRALAATRSPLAVPQLTTVLRYNNPGAAVAAVDGLIQIGDAAMTHLLANMDGYNYGARAWATRACAGIGDPRALALLQEAALTDFALSVRRAAAKGLGFLRWQSLPQEEQETVQKAIYDTLIQVCEDPEWVVRYGAIAGLENLAKQAQHYRQPLKDFLQSFVEQEPEAIVGERILWTLENIGPI.

Belongs to the CpcE/RpcE/PecE family. As to quaternary structure, cpcE and CpcF associate to form a lyase.

Its function is as follows. Required for the chromophorylation of the cpcA gene product. In Synechocystis sp. (strain ATCC 27184 / PCC 6803 / Kazusa), this protein is Phycocyanin alpha phycocyanobilin lyase CpcF (cpcF).